The following is a 128-amino-acid chain: Sulfurtransferase TusD (128 aa).

Residue Cys78 is the Cysteine persulfide intermediate of the active site.

It belongs to the DsrE/TusD family. Heterohexamer, formed by a dimer of trimers. The hexameric TusBCD complex contains 2 copies each of TusB, TusC and TusD. The TusBCD complex interacts with TusE.

It localises to the cytoplasm. Its function is as follows. Part of a sulfur-relay system required for 2-thiolation of 5-methylaminomethyl-2-thiouridine (mnm(5)s(2)U) at tRNA wobble positions. Accepts sulfur from TusA and transfers it in turn to TusE. The polypeptide is Sulfurtransferase TusD (Salmonella agona (strain SL483)).